The following is a 188-amino-acid chain: MKTAQEFRAGQVAMINGEPWVIQKAEFNKSGRNAAVVKMKLKNLLNGQATETVYKADDKFEPVILERKEVTYSYFADPMYVFMDNEFNQYEIEKDDLGDAYNFIEDGMQDVCEAVFYNDRVISIELPTTIVRQISYTEPAVRGDTSGKVMKVARLNSGYELRVAEFCDIGDYIEIDTRTFEYKSRAKA.

It belongs to the elongation factor P family.

Its subcellular location is the cytoplasm. It participates in protein biosynthesis; polypeptide chain elongation. Involved in peptide bond synthesis. Stimulates efficient translation and peptide-bond synthesis on native or reconstituted 70S ribosomes in vitro. Probably functions indirectly by altering the affinity of the ribosome for aminoacyl-tRNA, thus increasing their reactivity as acceptors for peptidyl transferase. The protein is Elongation factor P of Azotobacter vinelandii (strain DJ / ATCC BAA-1303).